Here is a 469-residue protein sequence, read N- to C-terminus: Glutamine synthetase (469 aa).

A GS beta-grasp domain is found at 13–97 (HEVKFVDLRF…IRCDILEPGT (85 aa)). The GS catalytic domain occupies 105 to 469 (PRSIAKRAED…PVEFELYYSV (365 aa)). Mg(2+) contacts are provided by E130 and E132. ATP is bound at residue E208. 2 residues coordinate Mg(2+): E213 and E221. L-glutamate is bound by residues 265-266 (NG) and G266. H270 contributes to the Mg(2+) binding site. ATP contacts are provided by residues 272 to 274 (HMS) and S274. Residues R322, E328, and R340 each contribute to the L-glutamate site. ATP-binding residues include R340, R345, and K353. E358 provides a ligand contact to Mg(2+). An L-glutamate-binding site is contributed by R360. Y398 carries the O-AMP-tyrosine modification.

The protein belongs to the glutamine synthetase family. As to quaternary structure, oligomer of 12 subunits arranged in the form of two hexagons. The cofactor is Mn(2+).

Its subcellular location is the cytoplasm. The enzyme catalyses L-glutamate + NH4(+) + ATP = L-glutamine + ADP + phosphate + H(+). Its activity is regulated as follows. When cellular nitrogen levels are high, the C-terminal adenylyl transferase (AT) of GlnE inhibits GlnA by covalent transfer of an adenylyl group from ATP to Tyr-398. Conversely, when nitrogen levels are low, the N-terminal adenylyl removase (AR) of GlnE activates GlnA by removing the adenylyl group by phosphorolysis. The fully adenylated enzyme complex is inactive. In terms of biological role, catalyzes the ATP-dependent biosynthesis of glutamine from glutamate and ammonia. In Salmonella typhi, this protein is Glutamine synthetase.